A 79-amino-acid chain; its full sequence is Large ribosomal subunit protein bL28 (79 aa).

It belongs to the bacterial ribosomal protein bL28 family.

The protein is Large ribosomal subunit protein bL28 of Blochmanniella floridana.